Here is a 429-residue protein sequence, read N- to C-terminus: Xaa-Pro dipeptidase (429 aa).

Residues Asp241, Asp252, His334, Glu372, and Glu411 each contribute to the Mn(2+) site.

Belongs to the peptidase M24B family. Bacterial-type prolidase subfamily. The cofactor is Mn(2+).

It catalyses the reaction Xaa-L-Pro dipeptide + H2O = an L-alpha-amino acid + L-proline. Splits dipeptides with a prolyl residue in the C-terminal position. The polypeptide is Xaa-Pro dipeptidase (Marinobacter nauticus (strain ATCC 700491 / DSM 11845 / VT8) (Marinobacter aquaeolei)).